Reading from the N-terminus, the 180-residue chain is Ribosome maturation factor RimM (180 aa).

Positions 97–169 constitute a PRC barrel domain; that stretch reads PGELSWDFFV…IITVDLPEGL (73 aa).

The protein belongs to the RimM family. As to quaternary structure, binds ribosomal protein uS19.

It localises to the cytoplasm. In terms of biological role, an accessory protein needed during the final step in the assembly of 30S ribosomal subunit, possibly for assembly of the head region. Essential for efficient processing of 16S rRNA. May be needed both before and after RbfA during the maturation of 16S rRNA. It has affinity for free ribosomal 30S subunits but not for 70S ribosomes. This is Ribosome maturation factor RimM from Bacteroides fragilis (strain YCH46).